The sequence spans 120 residues: Spermidine export protein MdtJ (120 aa).

A run of 4 helical transmembrane segments spans residues 1 to 21, 31 to 51, 54 to 74, and 81 to 101; these read MFYW…TLSM, AGFI…SFAV, IALG…ITIF, and EALS…IVLI.

This sequence belongs to the drug/metabolite transporter (DMT) superfamily. Small multidrug resistance (SMR) (TC 2.A.7.1) family. MdtJ subfamily. Forms a complex with MdtI.

It is found in the cell inner membrane. In terms of biological role, catalyzes the excretion of spermidine. The chain is Spermidine export protein MdtJ from Salmonella agona (strain SL483).